Reading from the N-terminus, the 398-residue chain is Succinate--CoA ligase [ADP-forming] subunit beta (398 aa).

The 245-residue stretch at 9-253 folds into the ATP-grasp domain; the sequence is KELLKSYGVA…EAEEDPKELE (245 aa). Residues K46, 53–55, E108, C111, and E116 each bind ATP; that span reads GRG. Residues N208 and D222 each contribute to the Mg(2+) site. Substrate contacts are provided by residues N273 and 330–332; that span reads GIM.

The protein belongs to the succinate/malate CoA ligase beta subunit family. Heterotetramer of two alpha and two beta subunits. Mg(2+) serves as cofactor.

It carries out the reaction succinate + ATP + CoA = succinyl-CoA + ADP + phosphate. It catalyses the reaction GTP + succinate + CoA = succinyl-CoA + GDP + phosphate. The protein operates within carbohydrate metabolism; tricarboxylic acid cycle; succinate from succinyl-CoA (ligase route): step 1/1. In terms of biological role, succinyl-CoA synthetase functions in the citric acid cycle (TCA), coupling the hydrolysis of succinyl-CoA to the synthesis of either ATP or GTP and thus represents the only step of substrate-level phosphorylation in the TCA. The beta subunit provides nucleotide specificity of the enzyme and binds the substrate succinate, while the binding sites for coenzyme A and phosphate are found in the alpha subunit. This Acidiphilium cryptum (strain JF-5) protein is Succinate--CoA ligase [ADP-forming] subunit beta.